Here is a 276-residue protein sequence, read N- to C-terminus: Ribosomal RNA small subunit methyltransferase A (276 aa).

Residues asparagine 24, leucine 26, glycine 51, glutamate 72, aspartate 97, and asparagine 118 each contribute to the S-adenosyl-L-methionine site.

Belongs to the class I-like SAM-binding methyltransferase superfamily. rRNA adenine N(6)-methyltransferase family. RsmA subfamily.

It is found in the cytoplasm. The enzyme catalyses adenosine(1518)/adenosine(1519) in 16S rRNA + 4 S-adenosyl-L-methionine = N(6)-dimethyladenosine(1518)/N(6)-dimethyladenosine(1519) in 16S rRNA + 4 S-adenosyl-L-homocysteine + 4 H(+). Functionally, specifically dimethylates two adjacent adenosines (A1518 and A1519) in the loop of a conserved hairpin near the 3'-end of 16S rRNA in the 30S particle. May play a critical role in biogenesis of 30S subunits. The chain is Ribosomal RNA small subunit methyltransferase A from Clostridium acetobutylicum (strain ATCC 824 / DSM 792 / JCM 1419 / IAM 19013 / LMG 5710 / NBRC 13948 / NRRL B-527 / VKM B-1787 / 2291 / W).